Consider the following 435-residue polypeptide: Methylenetetrahydrofolate--tRNA-(uracil-5-)-methyltransferase TrmFO (435 aa).

9-14 (GGGLAG) is an FAD binding site.

This sequence belongs to the MnmG family. TrmFO subfamily. It depends on FAD as a cofactor.

The protein resides in the cytoplasm. The catalysed reaction is uridine(54) in tRNA + (6R)-5,10-methylene-5,6,7,8-tetrahydrofolate + NADH + H(+) = 5-methyluridine(54) in tRNA + (6S)-5,6,7,8-tetrahydrofolate + NAD(+). It catalyses the reaction uridine(54) in tRNA + (6R)-5,10-methylene-5,6,7,8-tetrahydrofolate + NADPH + H(+) = 5-methyluridine(54) in tRNA + (6S)-5,6,7,8-tetrahydrofolate + NADP(+). In terms of biological role, catalyzes the folate-dependent formation of 5-methyl-uridine at position 54 (M-5-U54) in all tRNAs. This is Methylenetetrahydrofolate--tRNA-(uracil-5-)-methyltransferase TrmFO from Citrifermentans bemidjiense (strain ATCC BAA-1014 / DSM 16622 / JCM 12645 / Bem) (Geobacter bemidjiensis).